Here is a 311-residue protein sequence, read N- to C-terminus: Porphobilinogen deaminase (311 aa).

Cys241 is subject to S-(dipyrrolylmethanemethyl)cysteine.

The protein belongs to the HMBS family. In terms of assembly, monomer. The cofactor is dipyrromethane.

It carries out the reaction 4 porphobilinogen + H2O = hydroxymethylbilane + 4 NH4(+). The protein operates within porphyrin-containing compound metabolism; protoporphyrin-IX biosynthesis; coproporphyrinogen-III from 5-aminolevulinate: step 2/4. Its function is as follows. Tetrapolymerization of the monopyrrole PBG into the hydroxymethylbilane pre-uroporphyrinogen in several discrete steps. In Geobacillus sp. (strain WCH70), this protein is Porphobilinogen deaminase.